The following is a 78-amino-acid chain: MDVENTVVEILADLTGNDDIKDDMDMDLFETGTLDSMATVQLLLELQGQLDIDVPVSEFDRNEWATPNKIIAKAKELQ.

A Carrier domain is found at 1-78; the sequence is MDVENTVVEI…KIIAKAKELQ (78 aa). Serine 36 carries the O-(pantetheine 4'-phosphoryl)serine modification.

This sequence belongs to the DltC family. Post-translationally, 4'-phosphopantetheine is transferred from CoA to a specific serine of apo-DCP.

It is found in the cytoplasm. It functions in the pathway cell wall biogenesis; lipoteichoic acid biosynthesis. In terms of biological role, carrier protein involved in the D-alanylation of lipoteichoic acid (LTA). The loading of thioester-linked D-alanine onto DltC is catalyzed by D-alanine--D-alanyl carrier protein ligase DltA. The DltC-carried D-alanyl group is further transferred to cell membrane phosphatidylglycerol (PG) by forming an ester bond, probably catalyzed by DltD. D-alanylation of LTA plays an important role in modulating the properties of the cell wall in Gram-positive bacteria, influencing the net charge of the cell wall. The chain is D-alanyl carrier protein from Latilactobacillus sakei subsp. sakei (strain 23K) (Lactobacillus sakei subsp. sakei).